The chain runs to 830 residues: Scavenger receptor class F member 1 (830 aa).

The first 19 residues, 1–19, serve as a signal peptide directing secretion; it reads MGLGLLLPLLLLWTRGTQG. Residues 20–421 are Extracellular-facing; the sequence is SELDPKGQHV…CQPGSGSRDT (402 aa). EGF-like domains lie at 53–87, 95–130, 155–191, and 215–249; these read TIPI…AHCS, WGPD…ARCE, WSST…RRCS, and WGPE…ARCE. Cystine bridges form between Cys57–Cys69, Cys63–Cys75, Cys77–Cys86, Cys99–Cys111, Cys105–Cys118, Cys120–Cys129, Cys159–Cys172, Cys165–Cys179, Cys181–Cys190, Cys219–Cys230, Cys225–Cys237, and Cys239–Cys248. N-linked (GlcNAc...) asparagine glycosylation occurs at Asn289. EGF-like domains follow at residues 302–339 and 351–382; these read FGES…PRCE and CGST…PSCN. 6 disulfide bridges follow: Cys306-Cys319, Cys313-Cys326, Cys329-Cys338, Cys355-Cys363, Cys358-Cys370, and Cys372-Cys381. Asn382 and Asn393 each carry an N-linked (GlcNAc...) asparagine glycan. A helical membrane pass occupies residues 422–442; that stretch reads ALIAGSLVPLLLLFLGLACCA. Residues 443–830 lie on the Cytoplasmic side of the membrane; that stretch reads CCCWAPRSDL…VVPISRPPEP (388 aa). Disordered stretches follow at residues 516–539, 581–688, and 715–830; these read GWAT…PAYC, SLAR…SGPV, and FQKG…PPEP. Phosphoserine is present on residues Ser589 and Ser606. Residues 634-643 are compositionally biased toward acidic residues; it reads ESTGPEEAEA. Over residues 644–653 the composition is skewed to low complexity; that stretch reads PESFPAAASP.

As to quaternary structure, heterophilic interaction with SREC2 via its extracellular domain. The heterophilic interaction is suppressed by the presence of ligand such as Ac-LDL. Interacts with AVIL. As to expression, endothelial cells.

The protein localises to the membrane. Mediates the binding and degradation of acetylated low density lipoprotein (Ac-LDL). Mediates heterophilic interactions, suggesting a function as adhesion protein. Plays a role in the regulation of neurite-like outgrowth. In Homo sapiens (Human), this protein is Scavenger receptor class F member 1 (SCARF1).